A 56-amino-acid chain; its full sequence is Preprotein translocase subunit SecG (56 aa).

Topologically, residues 1-30 are cytoplasmic; it reads MARKDKKTLPASGAGIVRYFNDDTAGVKLS. Residues 31–52 form a helical membrane-spanning segment; it reads PKQVVIGTIIVALICIALRFTT. Topologically, residues 53–56 are extracellular; it reads SVGY.

This sequence belongs to the SEC61-beta family. As to quaternary structure, component of the protein translocase complex. Heterotrimer consisting of alpha (SecY), beta (SecG) and gamma (SecE) subunits. Can form oligomers of the heterotrimer.

It localises to the cell membrane. Functionally, involved in protein export. The function of the beta subunit is unknown, but it may be involved in stabilization of the trimeric complex. The polypeptide is Preprotein translocase subunit SecG (Methanosphaera stadtmanae (strain ATCC 43021 / DSM 3091 / JCM 11832 / MCB-3)).